The chain runs to 67 residues: UPF0434 protein Tcr_0959 (67 aa).

It belongs to the UPF0434 family.

The protein is UPF0434 protein Tcr_0959 of Hydrogenovibrio crunogenus (strain DSM 25203 / XCL-2) (Thiomicrospira crunogena).